Consider the following 410-residue polypeptide: Cysteine desulfurase IscS (410 aa).

Pyridoxal 5'-phosphate is bound by residues 80–81 (AT), Asn160, Gln188, and 208–210 (SGH). Position 211 is an N6-(pyridoxal phosphate)lysine (Lys211). Thr248 is a binding site for pyridoxal 5'-phosphate. Cys334 acts as the Cysteine persulfide intermediate in catalysis. Position 334 (Cys334) interacts with [2Fe-2S] cluster.

The protein belongs to the class-V pyridoxal-phosphate-dependent aminotransferase family. NifS/IscS subfamily. Homodimer. Forms a heterotetramer with IscU, interacts with other sulfur acceptors. Pyridoxal 5'-phosphate is required as a cofactor.

The protein resides in the cytoplasm. It catalyses the reaction (sulfur carrier)-H + L-cysteine = (sulfur carrier)-SH + L-alanine. It participates in cofactor biosynthesis; iron-sulfur cluster biosynthesis. Functionally, master enzyme that delivers sulfur to a number of partners involved in Fe-S cluster assembly, tRNA modification or cofactor biosynthesis. Catalyzes the removal of elemental sulfur atoms from cysteine to produce alanine. Functions as a sulfur delivery protein for Fe-S cluster synthesis onto IscU, an Fe-S scaffold assembly protein, as well as other S acceptor proteins. The chain is Cysteine desulfurase IscS from Rickettsia felis (strain ATCC VR-1525 / URRWXCal2) (Rickettsia azadi).